The primary structure comprises 122 residues: Large ribosomal subunit protein uL14 (122 aa).

This sequence belongs to the universal ribosomal protein uL14 family. Part of the 50S ribosomal subunit. Forms a cluster with proteins L3 and L19. In the 70S ribosome, L14 and L19 interact and together make contacts with the 16S rRNA in bridges B5 and B8.

Binds to 23S rRNA. Forms part of two intersubunit bridges in the 70S ribosome. The sequence is that of Large ribosomal subunit protein uL14 from Bacillus mycoides (strain KBAB4) (Bacillus weihenstephanensis).